The chain runs to 229 residues: Probable U3 small nucleolar RNA-associated protein 11 (229 aa).

2 disordered regions span residues 1–23 and 199–229; these read MSSLRNAIQRRAHKERAQPESRK and KKPGRKRKLREDEIENQTSRPVYKWRAQRKR.

It belongs to the UTP11 family. As to quaternary structure, component of the ribosomal small subunit (SSU) processome.

The protein localises to the nucleus. Its subcellular location is the nucleolus. In terms of biological role, involved in nucleolar processing of pre-18S ribosomal RNA. In Oryza sativa subsp. japonica (Rice), this protein is Probable U3 small nucleolar RNA-associated protein 11.